The chain runs to 98 residues: MSAKAQHYDVIRKPIITEKSTMASENGAVVFEVSIDSNKPQIKEAVESLFGVKVKAVNTTITKGKVKRFRGQLGKRKDVKKAYVTLEEGNTIDVSTGL.

The protein belongs to the universal ribosomal protein uL23 family. In terms of assembly, part of the 50S ribosomal subunit. Contacts protein L29, and trigger factor when it is bound to the ribosome.

One of the early assembly proteins it binds 23S rRNA. One of the proteins that surrounds the polypeptide exit tunnel on the outside of the ribosome. Forms the main docking site for trigger factor binding to the ribosome. The protein is Large ribosomal subunit protein uL23 of Ruegeria pomeroyi (strain ATCC 700808 / DSM 15171 / DSS-3) (Silicibacter pomeroyi).